Reading from the N-terminus, the 353-residue chain is Aromatic amino acid aminotransferase (353 aa).

Lysine 217 bears the N6-(pyridoxal phosphate)lysine mark.

The protein belongs to the class-II pyridoxal-phosphate-dependent aminotransferase family. Homodimer. The cofactor is pyridoxal 5'-phosphate.

The enzyme catalyses an aromatic L-alpha-amino acid + 2-oxoglutarate = an aromatic oxo-acid + L-glutamate. Its function is as follows. Aminotransferase that catalyzes the conversion of aromatic amino acids and 2-oxoglutarate into corresponding aromatic oxo acids and L-glutamate. The sequence is that of Aromatic amino acid aminotransferase from Mycobacterium tuberculosis (strain ATCC 25177 / H37Ra).